The primary structure comprises 258 residues: Probable dihydroorotate dehydrogenase B (NAD(+)), electron transfer subunit (258 aa).

In terms of domain architecture, FAD-binding FR-type spans Met-1–Ile-90. Residues Cys-210, Cys-215, Cys-218, and Cys-228 each coordinate [2Fe-2S] cluster.

It belongs to the PyrK family. In terms of assembly, heterotetramer of 2 PyrK and 2 PyrD type B subunits. It depends on [2Fe-2S] cluster as a cofactor. Requires FAD as cofactor.

It functions in the pathway pyrimidine metabolism; UMP biosynthesis via de novo pathway; orotate from (S)-dihydroorotate (NAD(+) route): step 1/1. Responsible for channeling the electrons from the oxidation of dihydroorotate from the FMN redox center in the PyrD type B subunit to the ultimate electron acceptor NAD(+). The chain is Probable dihydroorotate dehydrogenase B (NAD(+)), electron transfer subunit from Methanocella arvoryzae (strain DSM 22066 / NBRC 105507 / MRE50).